Here is a 530-residue protein sequence, read N- to C-terminus: Tryptophan 7-halogenase RebH (530 aa).

7 residues coordinate FAD: glycine 13, threonine 15, alanine 16, alanine 39, aspartate 41, glutamate 49, and alanine 50. Lysine 79 is an active-site residue. FAD-binding residues include valine 197 and threonine 348. Position 357 (glutamate 357) interacts with L-tryptophan. Threonine 359 and glycine 360 together coordinate chloride. Isoleucine 361 contributes to the FAD binding site. Tyrosine 454, tyrosine 455, glutamate 461, and phenylalanine 465 together coordinate L-tryptophan.

Belongs to the flavin-dependent halogenase family. Bacterial tryptophan halogenase subfamily. In terms of assembly, homodimer.

It catalyses the reaction L-tryptophan + FADH2 + chloride + O2 = 7-chloro-L-tryptophan + FAD + 2 H2O. Its function is as follows. Involved in the biosynthesis of the indolocarbazole antitumor agent rebeccamycin. Catalyzes the chlorination of tryptophan (Trp) at C7 position to yield 7-chlorotryptophan. It is also able to use bromide ions to generate monobrominated Trp. The chain is Tryptophan 7-halogenase RebH (rebH) from Lentzea aerocolonigenes (Lechevalieria aerocolonigenes).